The chain runs to 628 residues: Phosphomethylpyrimidine synthase (628 aa).

A disordered region spans residues 1–22 (MSKQEKTINLSESAQVDQQSVQ). The span at 7–22 (TINLSESAQVDQQSVQ) shows a compositional bias: polar residues. Substrate contacts are provided by residues asparagine 232, methionine 261, tyrosine 290, histidine 326, 346 to 348 (SRG), 387 to 390 (DGLR), and glutamate 426. Histidine 430 contributes to the Zn(2+) binding site. Tyrosine 453 lines the substrate pocket. Histidine 494 is a Zn(2+) binding site. [4Fe-4S] cluster-binding residues include cysteine 574, cysteine 577, and cysteine 582.

The protein belongs to the ThiC family. In terms of assembly, homodimer. It depends on [4Fe-4S] cluster as a cofactor.

The enzyme catalyses 5-amino-1-(5-phospho-beta-D-ribosyl)imidazole + S-adenosyl-L-methionine = 4-amino-2-methyl-5-(phosphooxymethyl)pyrimidine + CO + 5'-deoxyadenosine + formate + L-methionine + 3 H(+). It participates in cofactor biosynthesis; thiamine diphosphate biosynthesis. Its function is as follows. Catalyzes the synthesis of the hydroxymethylpyrimidine phosphate (HMP-P) moiety of thiamine from aminoimidazole ribotide (AIR) in a radical S-adenosyl-L-methionine (SAM)-dependent reaction. The polypeptide is Phosphomethylpyrimidine synthase (Pseudomonas putida (strain W619)).